Reading from the N-terminus, the 715-residue chain is MIYEGKAITVKALESGIVELKFDLKGESVNKFNRLTLNELRQAVDTIKADASIKGVIVSSGKDVFIVGADITEFVDNFKLPDAELVAGNLEANKIFSDFEDLNVPTVAAINGIALGGGLEMCLAADYRVMSTKAKIGLPEVKLGIYPGFGGTVRLPRLIGADNAIEWIAAGKENRPEDALKVGAVDAVVAPEKLQDAALELIKRAVSGEFDYKAKRQPKLEKLRLNAIEQMMAFETAKGFVAGQAGPNYPAPVEAIKTIQKAANFGRDKALEVEAAGFVKLAKTSAAQSLIGLFLNDQELKKKAKAYDEIAKDVKQAAVLGAGIMGGGIAYQSASKGTPILMKDINEHGIEQGLAEAAKLLVGRVDKGRMTAAKMAEVLNGIRPTLSYGDFGHVDLVVEAVVENPKVKQAVLAEVEDKVKEDTILASNTSTISISLLAKALKRPENFVGMHFFNPVHMMPLVEVIRGEKSSELAIATTVAYAKKMGKNPIVVNDCPGFLVNRVLFPYFGGFAKLVSAGVDFVRIDKIMEKFGWPMGPAYLMDVVGIDTGHHGRDVMAEGFPDRMKDDRRSAIDVLYEAKRLGQKNGKGFYAYEADKKGKQKKVADPSVLEVLKPIVYEQREVTDEDIINWMMIPLCLETVRCLEDGIVETAAEADMGLVYGIGFPPFRGGALRYIDSIGVAEFVALADQYADLGALYHPTAKLREMAKNGQSFFG.

An enoyl-CoA hydratase/isomerase region spans residues 1–190 (MIYEGKAITV…KVGAVDAVVA (190 aa)). D297 is a substrate binding site. Positions 312–715 (KDVKQAAVLG…MAKNGQSFFG (404 aa)) are 3-hydroxyacyl-CoA dehydrogenase. Residues M325, D344, 401-403 (VVE), K408, and S430 contribute to the NAD(+) site. Residue H451 is the For 3-hydroxyacyl-CoA dehydrogenase activity of the active site. An NAD(+)-binding site is contributed by N454. Substrate contacts are provided by N501 and Y660.

In the N-terminal section; belongs to the enoyl-CoA hydratase/isomerase family. This sequence in the C-terminal section; belongs to the 3-hydroxyacyl-CoA dehydrogenase family. As to quaternary structure, heterotetramer of two alpha chains (FadB) and two beta chains (FadA).

It catalyses the reaction a (3S)-3-hydroxyacyl-CoA + NAD(+) = a 3-oxoacyl-CoA + NADH + H(+). The catalysed reaction is a (3S)-3-hydroxyacyl-CoA = a (2E)-enoyl-CoA + H2O. The enzyme catalyses a 4-saturated-(3S)-3-hydroxyacyl-CoA = a (3E)-enoyl-CoA + H2O. It carries out the reaction (3S)-3-hydroxybutanoyl-CoA = (3R)-3-hydroxybutanoyl-CoA. It catalyses the reaction a (3Z)-enoyl-CoA = a 4-saturated (2E)-enoyl-CoA. The catalysed reaction is a (3E)-enoyl-CoA = a 4-saturated (2E)-enoyl-CoA. It functions in the pathway lipid metabolism; fatty acid beta-oxidation. Functionally, involved in the aerobic and anaerobic degradation of long-chain fatty acids via beta-oxidation cycle. Catalyzes the formation of 3-oxoacyl-CoA from enoyl-CoA via L-3-hydroxyacyl-CoA. It can also use D-3-hydroxyacyl-CoA and cis-3-enoyl-CoA as substrate. The sequence is that of Fatty acid oxidation complex subunit alpha from Pseudomonas fluorescens (strain Pf0-1).